A 699-amino-acid polypeptide reads, in one-letter code: 1,4-alpha-glucan-branching enzyme (699 aa).

Substrate is bound by residues 59–60 (NE) and 88–90 (WAP). Trp-104 lines the (1,4-alpha-D-glucosyl)n pocket. Position 115–118 (115–118 (DYGK)) interacts with substrate. Residue Lys-140 coordinates (1,4-alpha-D-glucosyl)n. Phosphotyrosine is present on Tyr-170. Position 330 to 333 (330 to 333 (EVLR)) interacts with substrate. Asp-354 serves as the catalytic Nucleophile. The Proton donor role is filled by Glu-409.

This sequence belongs to the glycosyl hydrolase 13 family. GlgB subfamily. Monomer.

It catalyses the reaction Transfers a segment of a (1-&gt;4)-alpha-D-glucan chain to a primary hydroxy group in a similar glucan chain.. It participates in glycan biosynthesis; glycogen biosynthesis. Its function is as follows. Glycogen-branching enzyme participates in the glycogen biosynthetic process along with glycogenin and glycogen synthase. Generates alpha-1,6-glucosidic branches from alpha-1,4-linked glucose chains, to increase solubility of the glycogen polymer. In Equus caballus (Horse), this protein is 1,4-alpha-glucan-branching enzyme (GBE1).